The sequence spans 62 residues: EAGEECDCGTPANPCCDAATCKLRPGAQCAEGLCCDQCRFGDWNDDTCTGQSADCPRNGLYG.

The region spanning 1 to 62 (EAGEECDCGT…ADCPRNGLYG (62 aa)) is the Disintegrin domain. 5 disulfide bridges follow: Cys-6-Cys-21, Cys-8-Cys-16, Cys-15-Cys-38, Cys-29-Cys-35, and Cys-34-Cys-48. The Cell attachment site motif lies at 41–42 (GD).

The protein belongs to the venom metalloproteinase (M12B) family. P-II subfamily. P-IIa sub-subfamily. As to quaternary structure, monomer. As to expression, expressed by the venom gland.

Its subcellular location is the secreted. Functionally, inhibits ADP- (IC(50)=63 nM) and collagen-induced (IC(50)=53 nM) aggregation of human platelets. In vitro, inhibits adhesion of endothelial cells to vitronectin, type-I collagen and, to a lower degree, fibronectin and laminin. The sequence is that of Disintegrin atropoimin from Metlapilcoatlus mexicanus (Central American jumping pitviper).